A 415-amino-acid chain; its full sequence is MTELIKKGSAAKEAAQFLAQASTKQKNAALLNLSNDLLTHTASLLEENNKDIIRAREKGTPETMIDRLRLTEERIKEISEAVKQVVALKDPIGEVTNMWKNEAELTIGKTRVPLGVIGIIYESRPNVTVDASVLCFKTGNAVILRGGSDAIDSNKALMSVIQDSLEASGFPRSSVQLIEDTSRETARDMMRLNRFLDVLIPRGGAKLIQTVLENATVPVIETGTGNCHIYVDKAAEKQMAIDILVNAKCSRPSVCNAAETLLIHRDVADAFLPEIETALKEYNVELRADERAREILKDSKAATESDWEDEFLDFILAIKVVDSVDEAINHINKYGTKHSEAIISNDYATGQAFHQKVDAAAVYINASTRFTDGFAMGFGAEIGISTQKLHARGPMGLTELTSTKYIIFGDGQIRN.

The protein belongs to the gamma-glutamyl phosphate reductase family.

The protein localises to the cytoplasm. It carries out the reaction L-glutamate 5-semialdehyde + phosphate + NADP(+) = L-glutamyl 5-phosphate + NADPH + H(+). It participates in amino-acid biosynthesis; L-proline biosynthesis; L-glutamate 5-semialdehyde from L-glutamate: step 2/2. Its function is as follows. Catalyzes the NADPH-dependent reduction of L-glutamate 5-phosphate into L-glutamate 5-semialdehyde and phosphate. The product spontaneously undergoes cyclization to form 1-pyrroline-5-carboxylate. This is Gamma-glutamyl phosphate reductase from Listeria monocytogenes serovar 1/2a (strain ATCC BAA-679 / EGD-e).